Here is an 876-residue protein sequence, read N- to C-terminus: Nitrogen regulatory protein areA (876 aa).

Residues 1 to 11 (MSGLTLGGGSG) show a composition bias toward gly residues. Disordered regions lie at residues 1 to 65 (MSGL…PTDS), 137 to 159 (QERE…PGMS), 192 to 248 (IPFS…ESEF), 393 to 413 (FSPP…AYDG), 451 to 498 (YMYN…PNEF), and 573 to 672 (SADM…GPTT). 3 stretches are compositionally biased toward polar residues: residues 198 to 211 (DHPS…SEAT), 399 to 408 (GYQSTASTPQ), and 455 to 480 (QGGS…QSPG). A compositionally biased stretch (basic and acidic residues) spans 602–611 (VRNRDQDPRR). The segment covering 615-640 (ARTSSTPNTAQLLRQSMQNQSSHTSP) has biased composition (polar residues). Residues 673-697 (CTNCFTQTTPLWRRNPEGQPLCNAC) form a GATA-type zinc finger. The segment at residues 721-742 (NRNSANSLAVGSSRVSKKSARK) is a DNA-binding region (H-T-H motif). Composition is skewed to polar residues over residues 724 to 734 (SANSLAVGSSR) and 742 to 766 (KNSV…TSES). The interval 724–856 (SANSLAVGSS…MPPAAVNPAN (133 aa)) is disordered. Composition is skewed to low complexity over residues 782 to 798 (PIAA…TTSP) and 828 to 855 (SPSS…VNPA).

Interacts with nmrA.

The protein resides in the nucleus. Its function is as follows. Transcription activator that binds the consensus DNA element 5'-CGATAG-3' and mediates nitrogen metabolite repression. Activates the transcription of uapA. The polypeptide is Nitrogen regulatory protein areA (areA) (Emericella nidulans (strain FGSC A4 / ATCC 38163 / CBS 112.46 / NRRL 194 / M139) (Aspergillus nidulans)).